Consider the following 1512-residue polypeptide: ATP-dependent permease YOR1 (1512 aa).

The interval 1-68 (MSPLLPTHWG…KGMKETEDGG (68 aa)) is disordered. Residues 13-29 (APQNEPTLPSPSHSVST) are compositionally biased toward polar residues. A compositionally biased stretch (basic and acidic residues) spans 31 to 65 (VGDEEKLRRSEGSDGEDRINLDSNKYDVKGMKETE). 5 consecutive transmembrane segments (helical) span residues 229-249 (ASLA…AGFI), 288-308 (GPGI…SLGM), 363-385 (FAAG…IIIL), 475-495 (GMTA…FITY), and 507-527 (IFTV…WPMT). Residues 246–533 (AGFIKVFGDT…WPMTLSSTAD (288 aa)) form the ABC transmembrane type-1 1 domain. The interval 594–656 (VLNGGKPGGP…SAPGIDEEIS (63 aa)) is disordered. Over residues 619-643 (AEEIQAETAAGQPGAGEASAEGQGQ) the composition is skewed to low complexity. An ABC transporter 1 domain is found at 651–871 (IDEEISEKKE…NGAFAKLIKE (221 aa)). Residue 683 to 690 (GAIGSGKS) coordinates ATP. Transmembrane regions (helical) follow at residues 937–957 (GVFM…FYVI), 974–994 (NGFY…ALFF), 1067–1087 (VILL…VSLL), and 1167–1187 (FLGS…SSVS). Positions 943 to 1217 (LLFFCIVVAQ…LVRQIAEVEN (275 aa)) constitute an ABC transmembrane type-1 2 domain. In terms of domain architecture, ABC transporter 2 spans 1255 to 1496 (IEFKDVRMRY…GGIFTEMCSK (242 aa)). An ATP-binding site is contributed by 1289–1296 (GRTGAGKS).

This sequence belongs to the ABC transporter superfamily. ABCC family. Conjugate transporter (TC 3.A.1.208) subfamily.

The protein localises to the extracellular vesicle membrane. The protein resides in the secreted. Functionally, transmembrane transporter. May play a role in the packaging or formation of extracellular vesicles (EVs), and in the export of virulence factors from EVs. Required for efficient non-lytic exocytosis from host macrophages, the process by which the yeast escapes host macrophages with both host cell and pathogen remaining viable. The polypeptide is ATP-dependent permease YOR1 (Cryptococcus neoformans var. grubii serotype A (strain H99 / ATCC 208821 / CBS 10515 / FGSC 9487) (Filobasidiella neoformans var. grubii)).